An 88-amino-acid chain; its full sequence is Small ribosomal subunit protein bS20 (88 aa).

The segment at Met-1–His-20 is disordered.

This sequence belongs to the bacterial ribosomal protein bS20 family.

Its function is as follows. Binds directly to 16S ribosomal RNA. The polypeptide is Small ribosomal subunit protein bS20 (Bacillus velezensis (strain DSM 23117 / BGSC 10A6 / LMG 26770 / FZB42) (Bacillus amyloliquefaciens subsp. plantarum)).